A 294-amino-acid chain; its full sequence is Picrinine-N-methytransferase TMT2 (294 aa).

The tract at residues 75–84 (LLDVGCGLGG) is SAM motif I. The short motif at 137–143 (DGEFDVV) is the Vacuolar targeting signal element. The interval 138–146 (GEFDVVFTL) is SAM motif II. Positions 165 to 174 (VGSPGAAIVV) are SAM motif III.

The protein belongs to the class I-like SAM-binding methyltransferase superfamily. gTMT family. Homodimer.

Its subcellular location is the vacuole membrane. It catalyses the reaction picrinine + S-adenosyl-L-methionine = ervincine + S-adenosyl-L-homocysteine + H(+). It participates in alkaloid biosynthesis; vindoline biosynthesis. In terms of biological role, S-adenosyl-L-methionine-dependent N-methyltransferase involved in the biosynthesis of biologically active monoterpenoid indole alkaloids (MIAs) natural products including vindoline. Catalyzes the conversion of picrinine to N-methylpicrinine (ervincine). The polypeptide is Picrinine-N-methytransferase TMT2 (Catharanthus roseus (Madagascar periwinkle)).